A 238-amino-acid polypeptide reads, in one-letter code: Ribonuclease PH (238 aa).

Residues arginine 86 and 124–126 (GTR) contribute to the phosphate site.

This sequence belongs to the RNase PH family. In terms of assembly, homohexameric ring arranged as a trimer of dimers.

It catalyses the reaction tRNA(n+1) + phosphate = tRNA(n) + a ribonucleoside 5'-diphosphate. Its function is as follows. Phosphorolytic 3'-5' exoribonuclease that plays an important role in tRNA 3'-end maturation. Removes nucleotide residues following the 3'-CCA terminus of tRNAs; can also add nucleotides to the ends of RNA molecules by using nucleoside diphosphates as substrates, but this may not be physiologically important. Probably plays a role in initiation of 16S rRNA degradation (leading to ribosome degradation) during starvation. This Marinobacter nauticus (strain ATCC 700491 / DSM 11845 / VT8) (Marinobacter aquaeolei) protein is Ribonuclease PH.